Consider the following 694-residue polypeptide: Elongation factor G (694 aa).

Residues 8 to 287 (EDYRNFGIMA…AVVEFLPAPT (280 aa)) form the tr-type G domain. GTP is bound by residues 17 to 24 (AHIDAGKT), 86 to 90 (DTPGH), and 140 to 143 (NKMD).

It belongs to the TRAFAC class translation factor GTPase superfamily. Classic translation factor GTPase family. EF-G/EF-2 subfamily.

The protein resides in the cytoplasm. In terms of biological role, catalyzes the GTP-dependent ribosomal translocation step during translation elongation. During this step, the ribosome changes from the pre-translocational (PRE) to the post-translocational (POST) state as the newly formed A-site-bound peptidyl-tRNA and P-site-bound deacylated tRNA move to the P and E sites, respectively. Catalyzes the coordinated movement of the two tRNA molecules, the mRNA and conformational changes in the ribosome. The protein is Elongation factor G of Brucella anthropi (strain ATCC 49188 / DSM 6882 / CCUG 24695 / JCM 21032 / LMG 3331 / NBRC 15819 / NCTC 12168 / Alc 37) (Ochrobactrum anthropi).